Consider the following 1021-residue polypeptide: Chondroitin sulfate ABC endolyase (1021 aa).

An N-terminal signal peptide occupies residues Met1 to Ala24. Positions 43, 70, 73, and 211 each coordinate Na(+). His501 acts as the Proton acceptor in catalysis. Tyr508 functions as the Proton donor in the catalytic mechanism.

The protein belongs to the polysaccharide lyase 8 family. As to quaternary structure, monomer.

It localises to the periplasm. The enzyme catalyses Endolytic cleavage of (1-&gt;4)-beta-galactosaminic bonds between N-acetylgalactosamine and either D-glucuronic acid or L-iduronic acid to produce a mixture of Delta(4)-unsaturated oligosaccharides of different sizes that are ultimately degraded to Delta(4)-unsaturated tetra- and disaccharides.. Its activity is regulated as follows. Is inhibited by Zn(2+), Ni(2+), Fe(2+) and Cu(2+). Endolytic, broad-specificity glycosaminoglycan lyase, which degrades the polysaccharides chondroitin, chondroitin-4-sulfate, chondroitin-6-sulfate, dermatan sulfate and to a lesser extent hyaluronan, by beta-elimination of 1,4-hexosaminidic bond to unsaturated tetrasaccharides and disaccharides. Is not active against keratan sulfate, heparan sulfate, and heparin. Is able to promote functional recovery in the injured central nervous system (CNS), via its role in the disruption of the normal organization of the extracellular matrix (ECM). This is Chondroitin sulfate ABC endolyase from Proteus vulgaris.